The chain runs to 1412 residues: DNA-directed RNA polymerase subunit beta' (1412 aa).

Residues Cys70, Cys72, Cys85, and Cys88 each contribute to the Zn(2+) site. The Mg(2+) site is built by Asp460, Asp462, and Asp464. The Zn(2+) site is built by Cys819, Cys893, Cys900, and Cys903. Positions 1392–1412 are disordered; sequence EEAFEFGTPSTPAEEPQHPAE.

Belongs to the RNA polymerase beta' chain family. In terms of assembly, the RNAP catalytic core consists of 2 alpha, 1 beta, 1 beta' and 1 omega subunit. When a sigma factor is associated with the core the holoenzyme is formed, which can initiate transcription. It depends on Mg(2+) as a cofactor. The cofactor is Zn(2+).

The catalysed reaction is RNA(n) + a ribonucleoside 5'-triphosphate = RNA(n+1) + diphosphate. In terms of biological role, DNA-dependent RNA polymerase catalyzes the transcription of DNA into RNA using the four ribonucleoside triphosphates as substrates. In Burkholderia thailandensis (strain ATCC 700388 / DSM 13276 / CCUG 48851 / CIP 106301 / E264), this protein is DNA-directed RNA polymerase subunit beta'.